We begin with the raw amino-acid sequence, 247 residues long: 5'-nucleotidase SurE (247 aa).

Aspartate 8, aspartate 9, serine 39, and asparagine 91 together coordinate a divalent metal cation.

This sequence belongs to the SurE nucleotidase family. It depends on a divalent metal cation as a cofactor.

It localises to the cytoplasm. The catalysed reaction is a ribonucleoside 5'-phosphate + H2O = a ribonucleoside + phosphate. Nucleotidase that shows phosphatase activity on nucleoside 5'-monophosphates. The protein is 5'-nucleotidase SurE of Nitrosomonas eutropha (strain DSM 101675 / C91 / Nm57).